Consider the following 539-residue polypeptide: Chaperonin GroEL (539 aa).

Residues 29–32 (TIGP), 86–90 (DGTTT), G414, and D493 each bind ATP.

It belongs to the chaperonin (HSP60) family. As to quaternary structure, forms a cylinder of 14 subunits composed of two heptameric rings stacked back-to-back. Interacts with the co-chaperonin GroES.

Its subcellular location is the cytoplasm. The enzyme catalyses ATP + H2O + a folded polypeptide = ADP + phosphate + an unfolded polypeptide.. Together with its co-chaperonin GroES, plays an essential role in assisting protein folding. The GroEL-GroES system forms a nano-cage that allows encapsulation of the non-native substrate proteins and provides a physical environment optimized to promote and accelerate protein folding. The protein is Chaperonin GroEL of Staphylococcus aureus.